A 267-amino-acid polypeptide reads, in one-letter code: Myxobacterial hemagglutinin (267 aa).

4 consecutive repeat copies span residues 1-66, 67-133, 134-200, and 201-267. Positions 1 to 267 are 4 X 65 AA tandem repeats; that stretch reads MAAYLVQNQW…GPIGFRARLG (267 aa).

This sequence belongs to the bacterial lectin family.

Its function is as follows. This lectin might have a role in the differentiation of cells. This is Myxobacterial hemagglutinin (mbhA) from Myxococcus xanthus.